The primary structure comprises 426 residues: Mothers against decapentaplegic homolog 7 (426 aa).

A disordered region spans residues 14-42 (WRSRAPGGEDEEEGVGGGGGGGELRGEGA). 2 positions are modified to N6-acetyllysine; alternate: Lys-64 and Lys-70. Glycyl lysine isopeptide (Lys-Gly) (interchain with G-Cter in ubiquitin); alternate cross-links involve residues Lys-64 and Lys-70. The 144-residue stretch at 64-207 (KAVRGAKGHH…LSRLCELESP (144 aa)) folds into the MH1 domain. Positions 67–76 (RGAKGHHHPH) are enriched in basic residues. The interval 67–87 (RGAKGHHHPHPPTSGAGAAGG) is disordered. Zn(2+) is bound by residues Cys-125, Cys-180, Cys-192, and His-197. Residues 208-211 (PPPY) carry the PY-motif motif. The tract at residues 208–217 (PPPYSRYPMD) is important for interaction with SMURF2. Ser-249 is subject to Phosphoserine. The 166-residue stretch at 261–426 (WCVVAYWEEK…CWLEVIFNSR (166 aa)) folds into the MH2 domain.

Belongs to the dwarfin/SMAD family. Interacts with COPS5. Interacts with STAMBP. Interacts with PPP1R15A. Interacts with NEDD4L. Interacts with RNF111, AXIN1 and AXIN2. Interacts with ACVR1B, SMURF1, SMURF2 and TGFBR1; SMAD7 recruits SMURF1 and SMURF2 to the TGF-beta receptor and regulates its degradation. Interacts with WWP1. Interacts with PDPK1 (via PH domain). Ubiquitinated by WWP1. Interacts with TSC22D1/TSC-22; the interaction requires TGF-beta and the interaction is inhibited by TGFBR1. In terms of processing, phosphorylation on Ser-249 does not affect its stability, nuclear localization or inhibitory function in TGFB signaling; however it affects its ability to regulate transcription. Phosphorylated by PDPK1. Post-translationally, ubiquitinated by WWP1. Polyubiquitinated by RNF111, which is enhanced by AXIN1 and promotes proteasomal degradation. In response to TGF-beta, ubiquitinated by SMURF1; which promotes its degradation. Ubiquitinated by ARK2C, promoting proteasomal degradation, leading to enhance the BMP-Smad signaling. Acetylation prevents ubiquitination and degradation mediated by SMURF1. As to expression, ubiquitous in various organs, with higher levels in brain and kidney.

It is found in the nucleus. The protein resides in the cytoplasm. Its function is as follows. Antagonist of signaling by TGF-beta (transforming growth factor) type 1 receptor superfamily members; has been shown to inhibit TGF-beta (Transforming growth factor) and activin signaling by associating with their receptors thus preventing SMAD2 access. Functions as an adapter to recruit SMURF2 to the TGF-beta receptor complex. Also acts by recruiting the PPP1R15A-PP1 complex to TGFBR1, which promotes its dephosphorylation. Positively regulates PDPK1 kinase activity by stimulating its dissociation from the 14-3-3 protein YWHAQ which acts as a negative regulator. This is Mothers against decapentaplegic homolog 7 (Smad7) from Mus musculus (Mouse).